Here is a 60-residue protein sequence, read N- to C-terminus: Large ribosomal subunit protein bL32 (60 aa).

It belongs to the bacterial ribosomal protein bL32 family.

The protein is Large ribosomal subunit protein bL32 of Borrelia duttonii (strain Ly).